The sequence spans 224 residues: N-terminal Xaa-Pro-Lys N-methyltransferase 1-A (224 aa).

S-adenosyl-L-methionine-binding positions include Gly-70, Arg-75, 92-94 (DVT), 120-121 (LQ), and Gln-136.

Belongs to the methyltransferase superfamily. NTM1 family.

The protein localises to the nucleus. The catalysed reaction is N-terminal L-alanyl-L-prolyl-L-lysyl-[protein] + 3 S-adenosyl-L-methionine = N-terminal N,N,N-trimethyl-L-alanyl-L-prolyl-L-lysyl-[protein] + 3 S-adenosyl-L-homocysteine + 3 H(+). It catalyses the reaction N-terminal L-seryl-L-prolyl-L-lysyl-[protein] + 3 S-adenosyl-L-methionine = N-terminal N,N,N-trimethyl-L-seryl-L-prolyl-L-lysyl-[protein] + 3 S-adenosyl-L-homocysteine + 3 H(+). The enzyme catalyses N-terminal L-prolyl-L-prolyl-L-lysyl-[protein] + 2 S-adenosyl-L-methionine = N-terminal N,N-dimethyl-L-prolyl-L-prolyl-L-lysyl-[protein] + 2 S-adenosyl-L-homocysteine + 2 H(+). Its function is as follows. Distributive alpha-N-methyltransferase that methylates the N-terminus of target proteins containing the N-terminal motif [Ala/Gly/Pro/Ser]-Pro-Lys when the initiator Met is cleaved. Specifically catalyzes mono-, di- or tri-methylation of the exposed alpha-amino group of the Ala, Gly or Ser residue in the [Ala/Gly/Ser]-Pro-Lys motif and mono- or di-methylation of Pro in the Pro-Pro-Lys motif. Required during mitosis for normal bipolar spindle formation and chromosome segregation via its action on target proteins. This Xenopus laevis (African clawed frog) protein is N-terminal Xaa-Pro-Lys N-methyltransferase 1-A (ntmt1-a).